The sequence spans 578 residues: ATP-dependent RNA helicase has-1 (578 aa).

The segment at 1-91 (MASEFSKKRK…KDAEAGDELT (91 aa)) is disordered. The segment covering 13–26 (DAKIATEDGAATDK) has biased composition (basic and acidic residues). A compositionally biased stretch (basic residues) spans 27–36 (KTKKVKKDKK). Composition is skewed to acidic residues over residues 43 to 54 (EVVEDATPEEEN) and 77 to 88 (EDSDDKDAEAGD). The Q motif signature appears at 107–135 (TDFSELNLSDKTMKAIAEMGFTKMTEIQR). The Helicase ATP-binding domain occupies 138 to 313 (IPPLLAGKDV…RISLRPGPLY (176 aa)). ATP is bound at residue 151–158 (AKTGSGKT). The DEAD box motif lies at 260-263 (DEAD). The Bipartite nuclear localization signal motif lies at 339 to 355 (KRFLLLFSFLKKMQKKK). The region spanning 343–497 (LLFSFLKKMQ…NVQSQLEKLI (155 aa)) is the Helicase C-terminal domain. Positions 556–578 (SMSRDKKQTSRRAYGSQPKQNRH) are disordered.

The protein belongs to the DEAD box helicase family. DDX18/HAS1 subfamily. As to quaternary structure, associates in the nucleolus with the 60S and pre-60S ribosomal subunits.

It localises to the nucleus. The protein localises to the nucleolus. The enzyme catalyses ATP + H2O = ADP + phosphate + H(+). Its function is as follows. ATP-dependent RNA helicase involved in 40S ribosomal subunit biogenesis. Required for the processing and cleavage of 35S pre-rRNA at sites A0, A1, and A2, leading to mature 18S rRNA. The protein is ATP-dependent RNA helicase has-1 (has-1) of Neurospora crassa (strain ATCC 24698 / 74-OR23-1A / CBS 708.71 / DSM 1257 / FGSC 987).